The chain runs to 215 residues: Cytochrome b6 (215 aa).

Residues 32–52 (IFYCLGGITLTCFLVQVATGF) traverse the membrane as a helical segment. Cysteine 35 contacts heme c. Positions 86 and 100 each coordinate heme b. Helical transmembrane passes span 90-110 (ASMM…TGGF), 116-136 (LTWV…VTGY), and 186-206 (LHTF…FPMI). The heme b site is built by histidine 187 and histidine 202.

It belongs to the cytochrome b family. PetB subfamily. As to quaternary structure, the 4 large subunits of the cytochrome b6-f complex are cytochrome b6, subunit IV (17 kDa polypeptide, PetD), cytochrome f and the Rieske protein, while the 4 small subunits are PetG, PetL, PetM and PetN. The complex functions as a dimer. The cofactor is heme b. Heme c serves as cofactor.

The protein resides in the plastid. Its subcellular location is the chloroplast thylakoid membrane. Functionally, component of the cytochrome b6-f complex, which mediates electron transfer between photosystem II (PSII) and photosystem I (PSI), cyclic electron flow around PSI, and state transitions. The chain is Cytochrome b6 from Helianthus annuus (Common sunflower).